We begin with the raw amino-acid sequence, 245 residues long: Phycocyanobilin:ferredoxin oxidoreductase (245 aa).

It belongs to the HY2 family.

It catalyses the reaction (2R,3Z)-phycocyanobilin + 4 oxidized [2Fe-2S]-[ferredoxin] = biliverdin IXalpha + 4 reduced [2Fe-2S]-[ferredoxin] + 4 H(+). Catalyzes the four-electron reduction of biliverdin IX-alpha (2-electron reduction at both the A and D rings); the reaction proceeds via an isolatable 2-electron intermediate, 181,182-dihydrobiliverdin. This chain is Phycocyanobilin:ferredoxin oxidoreductase, found in Microcystis aeruginosa (strain NIES-843 / IAM M-2473).